Here is a 189-residue protein sequence, read N- to C-terminus: Segregation and condensation protein B (189 aa).

Belongs to the ScpB family. Homodimer. Homodimerization may be required to stabilize the binding of ScpA to the Smc head domains. Component of a cohesin-like complex composed of ScpA, ScpB and the Smc homodimer, in which ScpA and ScpB bind to the head domain of Smc. The presence of the three proteins is required for the association of the complex with DNA.

It localises to the cytoplasm. Functionally, participates in chromosomal partition during cell division. May act via the formation of a condensin-like complex containing Smc and ScpA that pull DNA away from mid-cell into both cell halves. This is Segregation and condensation protein B from Streptococcus pneumoniae serotype 19F (strain G54).